We begin with the raw amino-acid sequence, 575 residues long: Adenine deaminase (575 aa).

This sequence belongs to the metallo-dependent hydrolases superfamily. Adenine deaminase family. The cofactor is Mn(2+).

It carries out the reaction adenine + H2O + H(+) = hypoxanthine + NH4(+). The protein is Adenine deaminase of Nitratidesulfovibrio vulgaris (strain DP4) (Desulfovibrio vulgaris).